A 466-amino-acid polypeptide reads, in one-letter code: MTVRLRFAPSPTGYLHVGGARTALFNWLYARKMNGKFVLRIEDTDLQRSTKESEKAIIESLKWCGIDWDEGPDIGGDFGPYRQSERVSEGIYKRYAQILVEKQCAYYTVYDKVDRKKVLFNTFEYPEEYEKKGHDITISFRVPEGITKFHDLLKGNMEFQNSVIGDFVIVKSDGFPTYNFAVVIDDYLMRITHVFRGEDHLSNTPKQIMIYKALGWEIPQFMHIPLILGFDRTPLSKRHGATSVEHFRKIGILNMGLMNYLALLGWSVGEEEVFDVKEKLVNFEPESISNKGVIFDPEKLEWVNGKHMRMINIEQLWNEFVEWIKFTNRKIPHCEESYALKVLNVCREKVNTLSQLYDFSYSFFFDDYTLEERFVSEYLSTSYAKEILRKAVVLFSELKDWSIEGTEKVCRALADMKIASKNKVFQLLRGAVTGKLVTPGLFETLSILGKKRVIERFEKLLNSVDC.

The short motif at 9 to 19 (PSPTGYLHVGG) is the 'HIGH' region element. A 'KMSKS' region motif is present at residues 234–238 (PLSKR). Residue lysine 237 coordinates ATP.

The protein belongs to the class-I aminoacyl-tRNA synthetase family. Glutamate--tRNA ligase type 1 subfamily. In terms of assembly, monomer.

It is found in the cytoplasm. The enzyme catalyses tRNA(Glu) + L-glutamate + ATP = L-glutamyl-tRNA(Glu) + AMP + diphosphate. Its function is as follows. Catalyzes the attachment of glutamate to tRNA(Glu) in a two-step reaction: glutamate is first activated by ATP to form Glu-AMP and then transferred to the acceptor end of tRNA(Glu). This chain is Glutamate--tRNA ligase 2, found in Pseudothermotoga lettingae (strain ATCC BAA-301 / DSM 14385 / NBRC 107922 / TMO) (Thermotoga lettingae).